A 118-amino-acid chain; its full sequence is Acidic phospholipase A2 PA-3 (118 aa).

7 disulfide bridges follow: C11-C71, C27-C117, C29-C45, C44-C98, C51-C91, C60-C84, and C78-C89. The Ca(2+) site is built by Y28, G30, and G32. Residue H48 is part of the active site. D49 lines the Ca(2+) pocket. D92 is a catalytic residue.

It belongs to the phospholipase A2 family. Group I subfamily. D49 sub-subfamily. The cofactor is Ca(2+). In terms of tissue distribution, expressed by the venom gland.

Its subcellular location is the secreted. It catalyses the reaction a 1,2-diacyl-sn-glycero-3-phosphocholine + H2O = a 1-acyl-sn-glycero-3-phosphocholine + a fatty acid + H(+). In terms of biological role, PLA2 catalyzes the calcium-dependent hydrolysis of the 2-acyl groups in 3-sn-phosphoglycerides. This chain is Acidic phospholipase A2 PA-3, found in Pseudechis australis (Mulga snake).